Here is a 146-residue protein sequence, read N- to C-terminus: Hemoglobin subunit beta (146 aa).

Valine 1 is subject to N-acetylvaline. A Globin domain is found at 2-146; sequence HLTDAEKAAI…VASALAHKYH (145 aa). Residue histidine 63 coordinates heme b. Lysine 82 carries the N6-acetyllysine modification. Heme b is bound at residue histidine 92. The residue at position 93 (cysteine 93) is an S-nitrosocysteine. Lysine 144 is modified (N6-acetyllysine).

The protein belongs to the globin family. In terms of assembly, heterotetramer of two alpha chains and two beta chains. In terms of tissue distribution, red blood cells.

In terms of biological role, involved in oxygen transport from the lung to the various peripheral tissues. This Microtus xanthognathus (Yellow-cheeked vole) protein is Hemoglobin subunit beta (HBB).